Reading from the N-terminus, the 281-residue chain is Protoheme IX farnesyltransferase (281 aa).

Transmembrane regions (helical) follow at residues 16 to 36 (TFLL…GADF), 38 to 58 (FVIA…INMW), 75 to 95 (VPAG…IFAI), 101 to 121 (FLVS…DIVV), 129 to 149 (KSPY…LGGW), 150 to 170 (VAVQ…LLWI), 202 to 224 (ASWA…YVLL), 228 to 250 (IFYL…KFAL), and 261 to 281 (YKLA…GVFL).

This sequence belongs to the UbiA prenyltransferase family. Protoheme IX farnesyltransferase subfamily.

The protein localises to the cell membrane. The enzyme catalyses heme b + (2E,6E)-farnesyl diphosphate + H2O = Fe(II)-heme o + diphosphate. It participates in porphyrin-containing compound metabolism; heme O biosynthesis; heme O from protoheme: step 1/1. In terms of biological role, converts heme B (protoheme IX) to heme O by substitution of the vinyl group on carbon 2 of heme B porphyrin ring with a hydroxyethyl farnesyl side group. The sequence is that of Protoheme IX farnesyltransferase from Archaeoglobus fulgidus (strain ATCC 49558 / DSM 4304 / JCM 9628 / NBRC 100126 / VC-16).